Here is a 1414-residue protein sequence, read N- to C-terminus: Phenyloxazoline synthase MbtB (1414 aa).

The Carrier 1 domain occupies 5-78 (TACSEIIRAE…AWSQLVSAGT (74 aa)). At serine 39 the chain carries O-(pantetheine 4'-phosphoryl)serine. A condensation/cyclization region spans residues 96 to 394 (EGEPFPVAPM…SSLLLDVDLT (299 aa)). The interval 579 to 975 (SYAQLRDQAS…RLPGVHAAAA (397 aa)) is adenylation. In terms of domain architecture, Carrier 2 spans 1057–1135 (APRTVLQRAL…ALAQLLTGRE (79 aa)). O-(pantetheine 4'-phosphoryl)serine is present on serine 1094. Residues 1188–1413 (GAVLVFPHAG…AVARMVSADV (226 aa)) are thioesterase.

Belongs to the ATP-dependent AMP-binding enzyme family. MbtB subfamily. Requires pantetheine 4'-phosphate as cofactor. Post-translationally, 4'-phosphopantetheine is transferred from CoA to a specific serine in each of the two carrier protein domains, leading to their activation from apo to holo forms.

Its pathway is siderophore biosynthesis; mycobactin biosynthesis. Its function is as follows. Involved in the initial steps of the mycobactin biosynthetic pathway. Putatively couples activated salicylic acid with serine or threonine and cyclizes this precursor to the hydroxyphenyloxazoline ring system present in this class of siderophores. Essential for growth in macrophages. In Mycobacterium tuberculosis (strain CDC 1551 / Oshkosh), this protein is Phenyloxazoline synthase MbtB (mbtB).